The chain runs to 466 residues: tRNA modification GTPase MnmE (466 aa).

(6S)-5-formyl-5,6,7,8-tetrahydrofolate contacts are provided by Arg25, Glu82, and Lys127. The TrmE-type G domain maps to 223-388 (GIKVVIAGQP…LRRQLLQIAG (166 aa)). Asn233 is a binding site for K(+). Residues 233–238 (NAGKSS), 252–258 (TPIAGTT), 277–280 (DTAG), 346–349 (NKAD), and 369–371 (SAR) each bind GTP. Ser237 provides a ligand contact to Mg(2+). Residues Thr252, Ile254, and Thr257 each coordinate K(+). Thr258 is a binding site for Mg(2+). Residue Lys466 participates in (6S)-5-formyl-5,6,7,8-tetrahydrofolate binding.

The protein belongs to the TRAFAC class TrmE-Era-EngA-EngB-Septin-like GTPase superfamily. TrmE GTPase family. In terms of assembly, homodimer. Heterotetramer of two MnmE and two MnmG subunits. It depends on K(+) as a cofactor.

It localises to the cytoplasm. Its function is as follows. Exhibits a very high intrinsic GTPase hydrolysis rate. Involved in the addition of a carboxymethylaminomethyl (cmnm) group at the wobble position (U34) of certain tRNAs, forming tRNA-cmnm(5)s(2)U34. The protein is tRNA modification GTPase MnmE of Acidovorax sp. (strain JS42).